A 169-amino-acid polypeptide reads, in one-letter code: Ribosome maturation factor RimM (169 aa).

The region spanning 96-166 is the PRC barrel domain; the sequence is EDEFYFADLI…AVVVRPVEVE (71 aa).

Belongs to the RimM family. Binds ribosomal protein uS19.

The protein resides in the cytoplasm. An accessory protein needed during the final step in the assembly of 30S ribosomal subunit, possibly for assembly of the head region. Essential for efficient processing of 16S rRNA. May be needed both before and after RbfA during the maturation of 16S rRNA. It has affinity for free ribosomal 30S subunits but not for 70S ribosomes. The polypeptide is Ribosome maturation factor RimM (Acidiphilium cryptum (strain JF-5)).